Here is a 494-residue protein sequence, read N- to C-terminus: Guanosine-5'-triphosphate,3'-diphosphate pyrophosphatase (494 aa).

It belongs to the GppA/Ppx family. GppA subfamily.

It catalyses the reaction guanosine 3'-diphosphate 5'-triphosphate + H2O = guanosine 3',5'-bis(diphosphate) + phosphate + H(+). The protein operates within purine metabolism; ppGpp biosynthesis; ppGpp from GTP: step 2/2. Its function is as follows. Catalyzes the conversion of pppGpp to ppGpp. Guanosine pentaphosphate (pppGpp) is a cytoplasmic signaling molecule which together with ppGpp controls the 'stringent response', an adaptive process that allows bacteria to respond to amino acid starvation, resulting in the coordinated regulation of numerous cellular activities. This is Guanosine-5'-triphosphate,3'-diphosphate pyrophosphatase from Shigella flexneri serotype 5b (strain 8401).